The following is a 603-amino-acid chain: Elongation factor 4 (603 aa).

In terms of domain architecture, tr-type G spans 7-189; the sequence is SRIRNFCIIA…SIVHLVPPPS (183 aa). Residues 19–24 and 136–139 each bind GTP; these read DHGKST and NKID.

It belongs to the TRAFAC class translation factor GTPase superfamily. Classic translation factor GTPase family. LepA subfamily.

It localises to the cell inner membrane. The enzyme catalyses GTP + H2O = GDP + phosphate + H(+). Functionally, required for accurate and efficient protein synthesis under certain stress conditions. May act as a fidelity factor of the translation reaction, by catalyzing a one-codon backward translocation of tRNAs on improperly translocated ribosomes. Back-translocation proceeds from a post-translocation (POST) complex to a pre-translocation (PRE) complex, thus giving elongation factor G a second chance to translocate the tRNAs correctly. Binds to ribosomes in a GTP-dependent manner. The sequence is that of Elongation factor 4 from Crocosphaera subtropica (strain ATCC 51142 / BH68) (Cyanothece sp. (strain ATCC 51142)).